Consider the following 432-residue polypeptide: Alcohol acyltransferase 9 (432 aa).

Catalysis depends on proton acceptor residues His156 and Asp379.

It belongs to the plant acyltransferase family. In terms of tissue distribution, expressed in fruit.

The enzyme catalyses 2-(methylsulfanyl)acetyl-CoA + butan-1-ol = butyl 2-(methylsulfanyl)acetate + CoA. The catalysed reaction is ethanol + acetyl-CoA = ethyl acetate + CoA. It carries out the reaction butan-1-ol + acetyl-CoA = butyl acetate + CoA. It catalyses the reaction butan-1-ol + propanoyl-CoA = butyl propanoate + CoA. Involved in the biosynthesis of volatile esters which confer kiwifruit flavor. Alcohol acyl transferase that can use a wide range of alcohols as substrate to produce esters. Exhibits acetyl-CoA:alcohol O-acyltransferase activity. The chain is Alcohol acyltransferase 9 from Actinidia deliciosa (Kiwi).